The primary structure comprises 211 residues: Redox-sensing transcriptional repressor Rex (211 aa).

The segment at residues 17–56 (LYYRLVSILKGKGIDRVNSKTISEALQIDSATIRRDFSYF) is a DNA-binding region (H-T-H motif). 91–96 (GIGNLG) contributes to the NAD(+) binding site.

Belongs to the transcriptional regulatory Rex family. Homodimer.

It localises to the cytoplasm. Modulates transcription in response to changes in cellular NADH/NAD(+) redox state. In Staphylococcus epidermidis (strain ATCC 12228 / FDA PCI 1200), this protein is Redox-sensing transcriptional repressor Rex.